The primary structure comprises 273 residues: Formamidopyrimidine-DNA glycosylase (273 aa).

Pro2 functions as the Schiff-base intermediate with DNA in the catalytic mechanism. The active-site Proton donor is Glu3. Lys58 functions as the Proton donor; for beta-elimination activity in the catalytic mechanism. DNA contacts are provided by His91 and Arg110. Residues 238–272 form an FPG-type zinc finger; sequence QVYGKTGQPCPRCGCLIKKIKVGGRGTHYCPRCQC. The active-site Proton donor; for delta-elimination activity is the Arg262.

Belongs to the FPG family. As to quaternary structure, monomer. The cofactor is Zn(2+).

The catalysed reaction is Hydrolysis of DNA containing ring-opened 7-methylguanine residues, releasing 2,6-diamino-4-hydroxy-5-(N-methyl)formamidopyrimidine.. The enzyme catalyses 2'-deoxyribonucleotide-(2'-deoxyribose 5'-phosphate)-2'-deoxyribonucleotide-DNA = a 3'-end 2'-deoxyribonucleotide-(2,3-dehydro-2,3-deoxyribose 5'-phosphate)-DNA + a 5'-end 5'-phospho-2'-deoxyribonucleoside-DNA + H(+). In terms of biological role, involved in base excision repair of DNA damaged by oxidation or by mutagenic agents. Acts as a DNA glycosylase that recognizes and removes damaged bases. Has a preference for oxidized purines, such as 7,8-dihydro-8-oxoguanine (8-oxoG). Has AP (apurinic/apyrimidinic) lyase activity and introduces nicks in the DNA strand. Cleaves the DNA backbone by beta-delta elimination to generate a single-strand break at the site of the removed base with both 3'- and 5'-phosphates. This Streptococcus agalactiae serotype Ia (strain ATCC 27591 / A909 / CDC SS700) protein is Formamidopyrimidine-DNA glycosylase.